Consider the following 410-residue polypeptide: Lipoyl synthase, mitochondrial (410 aa).

Positions 125, 130, 136, 157, 161, 164, and 373 each coordinate [4Fe-4S] cluster. The Radical SAM core domain maps to 140–362 (SDEEGTATAT…EKEAMDMGFL (223 aa)).

It belongs to the radical SAM superfamily. Lipoyl synthase family. It depends on [4Fe-4S] cluster as a cofactor.

It is found in the mitochondrion. The catalysed reaction is [[Fe-S] cluster scaffold protein carrying a second [4Fe-4S](2+) cluster] + N(6)-octanoyl-L-lysyl-[protein] + 2 oxidized [2Fe-2S]-[ferredoxin] + 2 S-adenosyl-L-methionine + 4 H(+) = [[Fe-S] cluster scaffold protein] + N(6)-[(R)-dihydrolipoyl]-L-lysyl-[protein] + 4 Fe(3+) + 2 hydrogen sulfide + 2 5'-deoxyadenosine + 2 L-methionine + 2 reduced [2Fe-2S]-[ferredoxin]. It participates in protein modification; protein lipoylation via endogenous pathway; protein N(6)-(lipoyl)lysine from octanoyl-[acyl-carrier-protein]: step 2/2. Functionally, catalyzes the radical-mediated insertion of two sulfur atoms into the C-6 and C-8 positions of the octanoyl moiety bound to the lipoyl domains of lipoate-dependent enzymes, thereby converting the octanoylated domains into lipoylated derivatives. This is Lipoyl synthase, mitochondrial from Leishmania major.